The sequence spans 218 residues: Glycerol-3-phosphate acyltransferase 2 (218 aa).

Transmembrane regions (helical) follow at residues 6–26 (YLLI…VLVG), 50–70 (VMGP…GTLA), 85–105 (LLLI…FLKF), 115–135 (AGVF…VFLP), and 159–179 (FWFH…LLFV).

It belongs to the PlsY family. As to quaternary structure, probably interacts with PlsX.

It is found in the cell membrane. It catalyses the reaction an acyl phosphate + sn-glycerol 3-phosphate = a 1-acyl-sn-glycero-3-phosphate + phosphate. The protein operates within lipid metabolism; phospholipid metabolism. In terms of biological role, catalyzes the transfer of an acyl group from acyl-phosphate (acyl-PO(4)) to glycerol-3-phosphate (G3P) to form lysophosphatidic acid (LPA). This enzyme utilizes acyl-phosphate as fatty acyl donor, but not acyl-CoA or acyl-ACP. This is Glycerol-3-phosphate acyltransferase 2 from Lactobacillus johnsonii (strain CNCM I-12250 / La1 / NCC 533).